Consider the following 1005-residue polypeptide: Probable beta-galactosidase A (1005 aa).

Positions 1–18 are cleaved as a signal peptide; sequence MKLLSVAAVALLAAQAAG. Positions 96, 140, 141, and 142 each coordinate substrate. Asparagine 156 carries an N-linked (GlcNAc...) asparagine glycan. Residue asparagine 199 coordinates substrate. Glutamate 200 acts as the Proton donor in catalysis. An intrachain disulfide couples cysteine 205 to cysteine 206. Tyrosine 260 is a binding site for substrate. A disulfide bridge links cysteine 266 with cysteine 315. The active-site Nucleophile is the glutamate 298. Residue tyrosine 364 participates in substrate binding. N-linked (GlcNAc...) asparagine glycosylation is found at asparagine 373, asparagine 402, asparagine 453, asparagine 478, asparagine 522, asparagine 622, asparagine 760, asparagine 777, asparagine 805, and asparagine 914.

The protein belongs to the glycosyl hydrolase 35 family.

The protein localises to the secreted. The enzyme catalyses Hydrolysis of terminal non-reducing beta-D-galactose residues in beta-D-galactosides.. Cleaves beta-linked terminal galactosyl residues from gangliosides, glycoproteins, and glycosaminoglycans. The polypeptide is Probable beta-galactosidase A (lacA) (Aspergillus flavus (strain ATCC 200026 / FGSC A1120 / IAM 13836 / NRRL 3357 / JCM 12722 / SRRC 167)).